Consider the following 300-residue polypeptide: Zinc finger CCCH-type antiviral protein 1-like (300 aa).

Ala2 bears the N-acetylalanine mark. Residues 252-263 (NTDNSSPSTEHS) are compositionally biased toward polar residues. The segment at 252 to 300 (NTDNSSPSTEHSQGLEKQGVHAAGAAEAGPLASVPAQSAKKPCPVSCEK) is disordered. Positions 271-283 (VHAAGAAEAGPLA) are enriched in low complexity.

The chain is Zinc finger CCCH-type antiviral protein 1-like (ZC3HAV1L) from Homo sapiens (Human).